Consider the following 346-residue polypeptide: NADH-ubiquinone oxidoreductase chain 2 (346 aa).

Transmembrane regions (helical) follow at residues 3-23 (PLIL…VMAS), 25-45 (HWLM…PILM), 59-79 (YFLT…INLM), 96-116 (IIMT…FWVP), 122-142 (ISLT…MSIL), 149-169 (INLN…GWGG), 178-198 (IMAY…VYNP), 200-220 (LTML…MLFI), 237-257 (APLI…LPPL), 274-294 (SSII…YFYM), and 322-342 (ITLL…TPML).

It belongs to the complex I subunit 2 family. Core subunit of respiratory chain NADH dehydrogenase (Complex I) which is composed of 45 different subunits. Interacts with TMEM242.

It is found in the mitochondrion inner membrane. The enzyme catalyses a ubiquinone + NADH + 5 H(+)(in) = a ubiquinol + NAD(+) + 4 H(+)(out). In terms of biological role, core subunit of the mitochondrial membrane respiratory chain NADH dehydrogenase (Complex I) which catalyzes electron transfer from NADH through the respiratory chain, using ubiquinone as an electron acceptor. Essential for the catalytic activity and assembly of complex I. This chain is NADH-ubiquinone oxidoreductase chain 2, found in Equus asinus (Donkey).